The primary structure comprises 142 residues: Small ribosomal subunit protein uS12 (142 aa).

Positions 1-30 (MGKTHGMGAARKLKSHRRTQRWADKSYKKS) are disordered. Over residues 11–20 (RKLKSHRRTQ) the composition is skewed to basic residues. Basic and acidic residues predominate over residues 21–30 (RWADKSYKKS). Pro-61 bears the Hydroxyproline mark.

This sequence belongs to the universal ribosomal protein uS12 family.

The polypeptide is Small ribosomal subunit protein uS12 (RPS23) (Euphorbia esula (Leafy spurge)).